We begin with the raw amino-acid sequence, 470 residues long: Cysteine--tRNA ligase (470 aa).

Residue cysteine 29 participates in Zn(2+) binding. A 'HIGH' region motif is present at residues 31–41 (PTVYNYAHIGN). Zn(2+) is bound by residues cysteine 211, histidine 236, and glutamate 240. Positions 273-277 (KMSKS) match the 'KMSKS' region motif. Residue lysine 276 coordinates ATP.

This sequence belongs to the class-I aminoacyl-tRNA synthetase family. In terms of assembly, monomer. Zn(2+) serves as cofactor.

It localises to the cytoplasm. It carries out the reaction tRNA(Cys) + L-cysteine + ATP = L-cysteinyl-tRNA(Cys) + AMP + diphosphate. The polypeptide is Cysteine--tRNA ligase (Phenylobacterium zucineum (strain HLK1)).